The sequence spans 1351 residues: DNA-directed RNA polymerase subunit beta' (1351 aa).

Residues Cys-70, Cys-72, Cys-85, and Cys-88 each coordinate Zn(2+). Residues Asp-460, Asp-462, and Asp-464 each coordinate Mg(2+). Residues Cys-801, Cys-875, Cys-882, and Cys-885 each coordinate Zn(2+).

Belongs to the RNA polymerase beta' chain family. As to quaternary structure, the RNAP catalytic core consists of 2 alpha, 1 beta, 1 beta' and 1 omega subunit. When a sigma factor is associated with the core the holoenzyme is formed, which can initiate transcription. Mg(2+) is required as a cofactor. Requires Zn(2+) as cofactor.

The catalysed reaction is RNA(n) + a ribonucleoside 5'-triphosphate = RNA(n+1) + diphosphate. Functionally, DNA-dependent RNA polymerase catalyzes the transcription of DNA into RNA using the four ribonucleoside triphosphates as substrates. The sequence is that of DNA-directed RNA polymerase subunit beta' from Syntrophobacter fumaroxidans (strain DSM 10017 / MPOB).